Consider the following 419-residue polypeptide: GTPase Obg (419 aa).

Positions 1–158 (MIFIDTAEII…RRLRLELKLV (158 aa)) constitute an Obg domain. The OBG-type G domain occupies 159 to 328 (AHVGLVGLPN…LVDVLFELIS (170 aa)). GTP is bound by residues 165–172 (GLPNAGKS), 190–194 (FTTRS), 211–214 (DVPG), 281–284 (NKID), and 309–311 (SAA). Residues S172 and T192 each contribute to the Mg(2+) site. In terms of domain architecture, OCT spans 344–419 (ELPPLPEDFS…VIHDKAFEIL (76 aa)).

This sequence belongs to the TRAFAC class OBG-HflX-like GTPase superfamily. OBG GTPase family. As to quaternary structure, monomer. The cofactor is Mg(2+).

It localises to the cytoplasm. An essential GTPase which binds GTP, GDP and possibly (p)ppGpp with moderate affinity, with high nucleotide exchange rates and a fairly low GTP hydrolysis rate. Plays a role in control of the cell cycle, stress response, ribosome biogenesis and in those bacteria that undergo differentiation, in morphogenesis control. The protein is GTPase Obg of Coprothermobacter proteolyticus (strain ATCC 35245 / DSM 5265 / OCM 4 / BT).